The chain runs to 218 residues: Probable septum site-determining protein MinC (218 aa).

It belongs to the MinC family. In terms of assembly, interacts with MinD and FtsZ.

Functionally, cell division inhibitor that blocks the formation of polar Z ring septums. Rapidly oscillates between the poles of the cell to destabilize FtsZ filaments that have formed before they mature into polar Z rings. Prevents FtsZ polymerization. The protein is Probable septum site-determining protein MinC of Kosmotoga olearia (strain ATCC BAA-1733 / DSM 21960 / TBF 19.5.1).